A 565-amino-acid polypeptide reads, in one-letter code: Sulfite reductase [NADPH] hemoprotein beta-component (565 aa).

Residues cysteine 429, cysteine 435, cysteine 474, and cysteine 478 each contribute to the [4Fe-4S] cluster site. Cysteine 478 contributes to the siroheme binding site.

This sequence belongs to the nitrite and sulfite reductase 4Fe-4S domain family. As to quaternary structure, alpha(8)-beta(8). The alpha component is a flavoprotein, the beta component is a hemoprotein. Siroheme serves as cofactor. [4Fe-4S] cluster is required as a cofactor.

It catalyses the reaction hydrogen sulfide + 3 NADP(+) + 3 H2O = sulfite + 3 NADPH + 4 H(+). It participates in sulfur metabolism; hydrogen sulfide biosynthesis; hydrogen sulfide from sulfite (NADPH route): step 1/1. Component of the sulfite reductase complex that catalyzes the 6-electron reduction of sulfite to sulfide. This is one of several activities required for the biosynthesis of L-cysteine from sulfate. This is Sulfite reductase [NADPH] hemoprotein beta-component from Shewanella pealeana (strain ATCC 700345 / ANG-SQ1).